We begin with the raw amino-acid sequence, 312 residues long: Malate dehydrogenase (312 aa).

Residues Gly12–Gly17 and Asp36 each bind NAD(+). Substrate-binding residues include Arg87 and Arg93. Residues Asn100 and Leu123–Asn125 contribute to the NAD(+) site. Residue Asn125 coordinates substrate. Phosphoserine is present on Ser149. Substrate is bound at residue Arg156. The active-site Proton acceptor is the His180.

The protein belongs to the LDH/MDH superfamily. MDH type 3 family.

It catalyses the reaction (S)-malate + NAD(+) = oxaloacetate + NADH + H(+). Functionally, catalyzes the reversible oxidation of malate to oxaloacetate. This chain is Malate dehydrogenase, found in Geobacillus thermodenitrificans (strain NG80-2).